Reading from the N-terminus, the 320-residue chain is Cytochrome f (320 aa).

A signal peptide spans 1 to 35 (MQTKNTFSWIKKEIIRSISVSLMIYIIARTSISNA). Heme contacts are provided by Tyr36, Cys56, Cys59, and His60. A helical membrane pass occupies residues 286–306 (VQGLLFFLASVILAQIFLVLK).

This sequence belongs to the cytochrome f family. In terms of assembly, the 4 large subunits of the cytochrome b6-f complex are cytochrome b6, subunit IV (17 kDa polypeptide, petD), cytochrome f and the Rieske protein, while the 4 small subunits are PetG, PetL, PetM and PetN. The complex functions as a dimer. It depends on heme as a cofactor.

It localises to the plastid. Its subcellular location is the chloroplast thylakoid membrane. In terms of biological role, component of the cytochrome b6-f complex, which mediates electron transfer between photosystem II (PSII) and photosystem I (PSI), cyclic electron flow around PSI, and state transitions. The sequence is that of Cytochrome f from Eucalyptus globulus subsp. globulus (Tasmanian blue gum).